The sequence spans 307 residues: MFFSLSYASEKAVIITDYKPVFLPVIAENKKIRIAIRSYLNNEKSYFVLVDPNSFKTEIALQELVILPTNKIEKENLLKKLSKTPYIKVLNKYSSTPYIQQNYGATSSMYKVKGQFLTIDMCPSSKSFEKDFFKKLVELSIKLNKPIPIAICVSGLWINKHTEEFLWLLKQQENGYLQITWVNHSFSHPYFKDKPLEDNFLLSNKDDFENEVLEAGKILVSYNIAPSPFFRFPGLVSDQTLIEKLKDLGFIPLGSNAWLAKGEKVQNGSFILVHGNSNEKAGIDLIMPMLPELKLLPIEKAFLLHDN.

This is an uncharacterized protein from Rickettsia conorii (strain ATCC VR-613 / Malish 7).